The chain runs to 187 residues: CASP-like protein 2C1 (187 aa).

Over 1 to 14 (MVAAARVVSGVKAE) the chain is Cytoplasmic. The chain crosses the membrane as a helical span at residues 15–35 (GLLRGACAALAAAAALLLGLS). Over 36 to 54 (TQTETVLLVRKKGTVKDVQ) the chain is Extracellular. A helical transmembrane segment spans residues 55-75 (ALWVLAMAAASAAGYHLLQLL). Residues 76 to 97 (KCLYLGRGGGRALAWTCLLLDK) are Cytoplasmic-facing. A helical transmembrane segment spans residues 98 to 118 (ACAYATFATTVAAAQACVVAL). At 119-139 (DGAHALQWTKLCNIYTRFCEQ) the chain is on the extracellular side. The helical transmembrane segment at 140-160 (VAGSLVLGMLAAVGTAVLSAA) threads the bilayer. The Cytoplasmic segment spans residues 161–187 (SARNVFRHYYCSSHSPPAPPPETCDAH).

It belongs to the Casparian strip membrane proteins (CASP) family. Homodimer and heterodimers.

The protein localises to the cell membrane. In Zea mays (Maize), this protein is CASP-like protein 2C1.